Consider the following 59-residue polypeptide: Large ribosomal subunit protein bL32C (59 aa).

Belongs to the bacterial ribosomal protein bL32 family.

This is Large ribosomal subunit protein bL32C (rpmF3) from Enterococcus faecalis (strain ATCC 700802 / V583).